Reading from the N-terminus, the 325-residue chain is Pyruvate dehydrogenase E1 component subunit beta (325 aa).

Residue Glu-59 participates in thiamine diphosphate binding.

In terms of assembly, heterodimer of an alpha and a beta chain. The cofactor is thiamine diphosphate.

It catalyses the reaction N(6)-[(R)-lipoyl]-L-lysyl-[protein] + pyruvate + H(+) = N(6)-[(R)-S(8)-acetyldihydrolipoyl]-L-lysyl-[protein] + CO2. The pyruvate dehydrogenase complex catalyzes the overall conversion of pyruvate to acetyl-CoA and CO(2). It contains multiple copies of three enzymatic components: pyruvate dehydrogenase (E1), dihydrolipoamide acetyltransferase (E2) and lipoamide dehydrogenase (E3). The chain is Pyruvate dehydrogenase E1 component subunit beta (pdhB) from Rickettsia bellii (strain RML369-C).